A 177-amino-acid polypeptide reads, in one-letter code: R-phycoerythrin beta chain (177 aa).

2 residues coordinate phycourobilin: Cys50 and Cys61. Asn72 carries the N4-methylasparagine modification. Residues Cys82 and Cys158 each coordinate (2R,3E)-phycoerythrobilin.

Belongs to the phycobiliprotein family. In terms of assembly, heterodimer of an alpha and a beta chain. Post-translationally, contains two covalently linked phycoerythrobilin chromophores and one covalently linked phycourobilin chromophore.

It is found in the plastid. The protein resides in the chloroplast thylakoid membrane. Functionally, light-harvesting photosynthetic bile pigment-protein from the phycobiliprotein complex. This Pyropia yezoensis (Susabi-nori) protein is R-phycoerythrin beta chain (cpeB).